Consider the following 691-residue polypeptide: DNA ligase (691 aa).

NAD(+) contacts are provided by residues 41–45, 90–91, and glutamate 130; these read DAEYD and SL. The active-site N6-AMP-lysine intermediate is lysine 132. 4 residues coordinate NAD(+): arginine 153, glutamate 190, lysine 307, and lysine 331. The Zn(2+) site is built by cysteine 425, cysteine 428, cysteine 443, and cysteine 449. The 82-residue stretch at 610–691 folds into the BRCT domain; it reads APQGVLAGKT…MHKLLEGHAR (82 aa).

The protein belongs to the NAD-dependent DNA ligase family. LigA subfamily. Mg(2+) serves as cofactor. It depends on Mn(2+) as a cofactor.

It carries out the reaction NAD(+) + (deoxyribonucleotide)n-3'-hydroxyl + 5'-phospho-(deoxyribonucleotide)m = (deoxyribonucleotide)n+m + AMP + beta-nicotinamide D-nucleotide.. In terms of biological role, DNA ligase that catalyzes the formation of phosphodiester linkages between 5'-phosphoryl and 3'-hydroxyl groups in double-stranded DNA using NAD as a coenzyme and as the energy source for the reaction. It is essential for DNA replication and repair of damaged DNA. This Burkholderia thailandensis (strain ATCC 700388 / DSM 13276 / CCUG 48851 / CIP 106301 / E264) protein is DNA ligase.